The primary structure comprises 157 residues: uncharacterized protein (157 aa).

This sequence belongs to the mimivirus L242/L243 family.

This is an uncharacterized protein from Acanthamoeba polyphaga (Amoeba).